A 502-amino-acid chain; its full sequence is ATP synthase subunit alpha (502 aa).

169-176 (GDRQTGKT) contributes to the ATP binding site.

It belongs to the ATPase alpha/beta chains family. F-type ATPases have 2 components, CF(1) - the catalytic core - and CF(0) - the membrane proton channel. CF(1) has five subunits: alpha(3), beta(3), gamma(1), delta(1), epsilon(1). CF(0) has three main subunits: a(1), b(2) and c(9-12). The alpha and beta chains form an alternating ring which encloses part of the gamma chain. CF(1) is attached to CF(0) by a central stalk formed by the gamma and epsilon chains, while a peripheral stalk is formed by the delta and b chains.

The protein resides in the cell membrane. It catalyses the reaction ATP + H2O + 4 H(+)(in) = ADP + phosphate + 5 H(+)(out). Functionally, produces ATP from ADP in the presence of a proton gradient across the membrane. The alpha chain is a regulatory subunit. This chain is ATP synthase subunit alpha, found in Staphylococcus aureus (strain Mu3 / ATCC 700698).